Reading from the N-terminus, the 552-residue chain is Phosphoribosylaminoimidazole carboxylase (552 aa).

An ATP-grasp domain is found at 108–295 (KQHLQVFKIA…QFEAHLRAIC (188 aa)). ATP is bound at residue 134–189 (GQEFGYPFVLKSKTLAYDGRGNYVVHQPSEIPTAIKALGDRPLYVEKFVPFSMEIA).

The protein in the C-terminal section; belongs to the AIR carboxylase family. Class I subfamily.

It catalyses the reaction 5-amino-1-(5-phospho-D-ribosyl)imidazole-4-carboxylate + H(+) = 5-amino-1-(5-phospho-beta-D-ribosyl)imidazole + CO2. It participates in purine metabolism; IMP biosynthesis via de novo pathway; 5-amino-1-(5-phospho-D-ribosyl)imidazole-4-carboxylate from 5-amino-1-(5-phospho-D-ribosyl)imidazole (carboxylase route): step 1/1. This chain is Phosphoribosylaminoimidazole carboxylase (ade6), found in Schizosaccharomyces pombe (strain 972 / ATCC 24843) (Fission yeast).